The primary structure comprises 228 residues: Aspartyl protease inhibitor (228 aa).

Positions 1–15 (MKLIELCVLCAIAFA) are cleaved as a signal peptide. A compositionally biased stretch (basic and acidic residues) spans 88–112 (KLKSRMSGKKEEKAAVTSTKDEDLP). The disordered stretch occupies residues 88 to 119 (KLKSRMSGKKEEKAAVTSTKDEDLPKPPQKPS). C134 and C224 are disulfide-bonded.

The protein belongs to the protease inhibitor I33 family.

It is found in the secreted. In terms of biological role, aspartyl protease inhibitor. In Trichostrongylus colubriformis (Black scour worm), this protein is Aspartyl protease inhibitor.